The sequence spans 104 residues: Glycine-rich protein (104 aa).

Positions 1–18 are cleaved as a signal peptide; the sequence is MKSMIAAILFALVATSLA.

The protein belongs to the non-disulfide-bridged peptide (NDBP) superfamily. In terms of tissue distribution, expressed by the venom gland.

Its subcellular location is the secreted. This chain is Glycine-rich protein, found in Lychas mucronatus (Chinese swimming scorpion).